Reading from the N-terminus, the 269-residue chain is Aegyptin-like protein (269 aa).

Positions 1–19 are cleaved as a signal peptide; that stretch reads MKLLLLLASVLCLALIVSA. The interval 19–152 is disordered; that stretch reads ARPSDETTDQ…GGAEGGEESP (134 aa). The interval 38–148 is GE-rich region which mediates binding of Ca(2+); it reads TSDSYHQEED…AGEEGGAEGG (111 aa). Composition is skewed to acidic residues over residues 56–73, 98–121, and 131–149; these read GTED…ESSS, GEED…EGGA, and GGAD…EGGE. A mediates binding of host collagen and inhibition of platelet aggregation region spans residues 148-269; it reads GEESPVNTYH…DCIVEKRDSE (122 aa). Disulfide bonds link Cys-208–Cys-261 and Cys-230–Cys-239.

The protein belongs to the aegyptin family. In terms of tissue distribution, female saliva (at protein level). Distal lateral lobes of female salivary gland (at protein level). Low-level expression in male salivary gland. Not detected in female and male carcasses.

It localises to the secreted. Functionally, modulates blood feeding of female mosquitoes on vertebrate hosts. Inhibits collagen-induced platelet aggregation in the host via preventing collagen interaction with its ligands: glycoprotein VI and integrin alpha-2/beta-1 (ITGA2/ITGB1). Inhibits collagen-induced increase of Ca(2+) levels in host platelets. Binds to host collagens. Binds Ca(2+). Prevents a decrease in platelet count in the host blood after collagen injection. Its function is as follows. (Microbial infection) Does not affect the development of Plasmodium berghei parasites in mosquitoes. The protein is Aegyptin-like protein of Anopheles stephensi (Indo-Pakistan malaria mosquito).